A 73-amino-acid chain; its full sequence is Translation initiation factor IF-1 3 (73 aa).

Residues 1–72 enclose the S1-like domain; that stretch reads MAKEELVEFG…TKGRINYRHK (72 aa).

This sequence belongs to the IF-1 family. Component of the 30S ribosomal translation pre-initiation complex which assembles on the 30S ribosome in the order IF-2 and IF-3, IF-1 and N-formylmethionyl-tRNA(fMet); mRNA recruitment can occur at any time during PIC assembly.

It localises to the cytoplasm. Its function is as follows. One of the essential components for the initiation of protein synthesis. Stabilizes the binding of IF-2 and IF-3 on the 30S subunit to which N-formylmethionyl-tRNA(fMet) subsequently binds. Helps modulate mRNA selection, yielding the 30S pre-initiation complex (PIC). Upon addition of the 50S ribosomal subunit IF-1, IF-2 and IF-3 are released leaving the mature 70S translation initiation complex. This chain is Translation initiation factor IF-1 3, found in Cupriavidus metallidurans (strain ATCC 43123 / DSM 2839 / NBRC 102507 / CH34) (Ralstonia metallidurans).